The following is a 519-amino-acid chain: T-box transcription factor TBX5 (519 aa).

Positions 1-43 (MADTEEAYGMPDTPVEAEPKELQCEPKQDNQMGASSKTPTSPQ) are disordered. Residues 17–28 (AEPKELQCEPKQ) are compositionally biased toward basic and acidic residues. Polar residues predominate over residues 29-43 (DNQMGASSKTPTSPQ). A DNA-binding region (T-box) is located at residues 63–238 (LWLKFHEVGT…NNPFAKGFRG (176 aa)). 2 disordered regions span residues 254-312 (EYPV…SAYP) and 335-376 (ELSY…TESA). Polar residues predominate over residues 262–303 (TVRQKVSSNHSPFSQETRNITGSSTLNSQYQCENGVSSTSQD).

As to quaternary structure, monomer. Homodimer (via the T-box); binds DNA as homodimer.

The protein resides in the nucleus. Its subcellular location is the cytoplasm. DNA-binding protein that regulates the transcription of several genes and is involved in heart development and limb pattern formation. May bind to the core DNA motif of promoters. The sequence is that of T-box transcription factor TBX5 (tbx5) from Xenopus tropicalis (Western clawed frog).